A 378-amino-acid polypeptide reads, in one-letter code: MTRVFHPALSGPEQSRYQITDVASVSRSGLCINESPIRDRCGRTMGDLRLSVIDQCNLRCRYCMPEAEYAWLPRADLLSVDEISLIVDAFIAVGVDKIRLTGGEPLIRSDLAAIIEVISAKVGDGSGLQDLAITTNGVLLADQARKLKSAGMRRITISLDTLRPDRFKAISQRGTHYKVIEGIEAVAAAGFTDTKLDSVVIRGFNDDELSDLIEFARNVNAEVRFIEYMDVGGATQWSMDKVFTKAQMLSTLGKKYGPIAALPKYDSAPANRYRLPDGTTFGIIASTTEPFCATCDRSRLTADGIWLHCLYALSGINLRESVRAGASANDVVQILQRGWRDRANRGAEQRLAQRTRQVFLPVSRLKRDPHLEMHTRGG.

One can recognise a Radical SAM core domain in the interval 40–259 (RCGRTMGDLR…STLGKKYGPI (220 aa)). Position 49 (R49) interacts with GTP. Residues C56 and C60 each coordinate [4Fe-4S] cluster. Y62 contributes to the S-adenosyl-L-methionine binding site. C63 serves as a coordination point for [4Fe-4S] cluster. R99 contacts GTP. S-adenosyl-L-methionine is bound at residue G103. T134 contributes to the GTP binding site. S158 contributes to the S-adenosyl-L-methionine binding site. Residue K195 coordinates GTP. Residue M229 coordinates S-adenosyl-L-methionine. Positions 292 and 295 each coordinate [4Fe-4S] cluster. A GTP-binding site is contributed by 297-299 (RSR). C309 lines the [4Fe-4S] cluster pocket.

Belongs to the radical SAM superfamily. MoaA family. Monomer and homodimer. The cofactor is [4Fe-4S] cluster.

The enzyme catalyses GTP + AH2 + S-adenosyl-L-methionine = (8S)-3',8-cyclo-7,8-dihydroguanosine 5'-triphosphate + 5'-deoxyadenosine + L-methionine + A + H(+). It functions in the pathway cofactor biosynthesis; molybdopterin biosynthesis. Catalyzes the cyclization of GTP to (8S)-3',8-cyclo-7,8-dihydroguanosine 5'-triphosphate. In Mycobacterium bovis (strain ATCC BAA-935 / AF2122/97), this protein is GTP 3',8-cyclase 3.